The sequence spans 575 residues: Protein AUXIN SIGNALING F-BOX 2 (575 aa).

The F-box domain maps to 1–47 (MNYFPDEVIEHVFDFVTSHKDRNAISLVCKSWYKIERYSRQKVFIGN). Residue K69 coordinates 1D-myo-inositol hexakisphosphate. Positions 76-77 (DF) are interaction with auxin-responsive proteins. 1D-myo-inositol hexakisphosphate-binding positions include 108-109 (KR) and R340. Positions 343 to 348 (PSDLLG) are interaction with auxin-responsive proteins. Residue 396–398 (RFR) participates in 1D-myo-inositol hexakisphosphate binding. The segment at 400-404 (CILEP) is interaction with auxin-responsive proteins. R431 contributes to the 1D-myo-inositol hexakisphosphate binding site. Positions 459–460 (AF) are interaction with auxin-responsive proteins. Residues 479–480 (KK) and R504 each bind 1D-myo-inositol hexakisphosphate.

In terms of assembly, part of a SCF (SKP1-cullin-F-box) protein ligase complex. Interacts with Aux/IAA proteins (IAA7) in an auxin-dependent manner. Ubiquitous, with higher levels in seedlings.

It localises to the nucleus. It participates in protein modification; protein ubiquitination. Component of SCF(ASK-cullin-F-box) E3 ubiquitin ligase complexes, which may mediate the ubiquitination and subsequent proteasomal degradation of target proteins. Confers sensitivity to the virulent bacterial pathogen P.syringae. Auxin receptor that mediates Aux/IAA proteins proteasomal degradation and auxin-regulated transcription. Involved in embryogenesis regulation by auxin. In Arabidopsis thaliana (Mouse-ear cress), this protein is Protein AUXIN SIGNALING F-BOX 2 (AFB2).